Here is a 424-residue protein sequence, read N- to C-terminus: UPF0597 protein Ssed_2537 (424 aa).

Belongs to the UPF0597 family.

The sequence is that of UPF0597 protein Ssed_2537 from Shewanella sediminis (strain HAW-EB3).